We begin with the raw amino-acid sequence, 206 residues long: Small ribosomal subunit protein uS4 (206 aa).

The S4 RNA-binding domain maps to 96–158 (SRLDNVVYRM…AKGQLRIKGA (63 aa)).

Belongs to the universal ribosomal protein uS4 family. Part of the 30S ribosomal subunit. Contacts protein S5. The interaction surface between S4 and S5 is involved in control of translational fidelity.

Its function is as follows. One of the primary rRNA binding proteins, it binds directly to 16S rRNA where it nucleates assembly of the body of the 30S subunit. Functionally, with S5 and S12 plays an important role in translational accuracy. In Coxiella burnetii (strain CbuG_Q212) (Coxiella burnetii (strain Q212)), this protein is Small ribosomal subunit protein uS4.